A 267-amino-acid polypeptide reads, in one-letter code: Digeranylgeranylglyceryl phosphate synthase (267 aa).

7 helical membrane passes run 10 to 30, 33 to 53, 80 to 100, 104 to 121, 139 to 159, 198 to 218, and 247 to 267; these read ANCVMAGAASLTGMLVSGALL, LHTPVLVFSAVLLITGGGNAI, AALIWSVALFIAGCLIAGLIN, LALALLNSFVLIIYAARL, TFLFGGLAASPSSITAFLSIL, VLASLVLIVAMLLSYLVPLGI, and QRWIKMGMGMALVAFLIGYHI.

Belongs to the UbiA prenyltransferase family. DGGGP synthase subfamily. Mg(2+) is required as a cofactor.

The protein localises to the cell membrane. The catalysed reaction is sn-3-O-(geranylgeranyl)glycerol 1-phosphate + (2E,6E,10E)-geranylgeranyl diphosphate = 2,3-bis-O-(geranylgeranyl)-sn-glycerol 1-phosphate + diphosphate. It functions in the pathway membrane lipid metabolism; glycerophospholipid metabolism. Prenyltransferase that catalyzes the transfer of the geranylgeranyl moiety of geranylgeranyl diphosphate (GGPP) to the C2 hydroxyl of (S)-3-O-geranylgeranylglyceryl phosphate (GGGP). This reaction is the second ether-bond-formation step in the biosynthesis of archaeal membrane lipids. The chain is Digeranylgeranylglyceryl phosphate synthase from Methanothrix thermoacetophila (strain DSM 6194 / JCM 14653 / NBRC 101360 / PT) (Methanosaeta thermophila).